A 406-amino-acid polypeptide reads, in one-letter code: COP9 signalosome complex subunit 4 (406 aa).

N-acetylalanine is present on Ala2. Lys25 carries the N6-acetyllysine modification. Residues Tyr197–Ala366 form the PCI domain.

Belongs to the CSN4 family. Component of the CSN complex, composed of COPS1/GPS1, COPS2, COPS3, COPS4, COPS5, COPS6, COPS7 (COPS7A or COPS7B), COPS8 and COPS9. In the complex, it probably interacts directly with COPS1, COPS2, COPS3, COPS5, COPS6, COPS7 (COPS7A or COPS7B) and COPS8. Interacts with TOR1A; the interaction is direct and associates TOR1A and SNAPIN with the CSN complex. Interacts with STON2; controls STON2 neddylation levels. Interacts with ERCC6.

It localises to the cytoplasm. Its subcellular location is the nucleus. It is found in the cytoplasmic vesicle. The protein localises to the secretory vesicle. The protein resides in the synaptic vesicle. Its function is as follows. Component of the COP9 signalosome complex (CSN), a complex involved in various cellular and developmental processes. The CSN complex is an essential regulator of the ubiquitin (Ubl) conjugation pathway by mediating the deneddylation of the cullin subunits of SCF-type E3 ligase complexes, leading to decrease the Ubl ligase activity of SCF-type complexes such as SCF, CSA or DDB2. Also involved in the deneddylation of non-cullin subunits such as STON2. The complex is also involved in phosphorylation of p53/TP53, c-jun/JUN, IkappaBalpha/NFKBIA, ITPK1, IRF8/ICSBP and SNAPIN, possibly via its association with CK2 and PKD kinases. CSN-dependent phosphorylation of TP53 and JUN promotes and protects degradation by the Ubl system, respectively. In Mus musculus (Mouse), this protein is COP9 signalosome complex subunit 4 (Cops4).